An 87-amino-acid chain; its full sequence is Large ribosomal subunit protein bL27 (87 aa).

Residues 1–25 (MAHKKGASSSRNGRDSNAQRLGVKR) are disordered. The span at 7–19 (ASSSRNGRDSNAQ) shows a compositional bias: polar residues.

This sequence belongs to the bacterial ribosomal protein bL27 family.

The chain is Large ribosomal subunit protein bL27 from Rhodococcus opacus (strain B4).